Reading from the N-terminus, the 593-residue chain is Transcription factor ATEG_07667 (593 aa).

Positions cysteine 18–cysteine 47 form a DNA-binding region, zn(2)-C6 fungal-type.

Its subcellular location is the nucleus. In terms of biological role, transcriptional regulator that regulates both the azasperpyranone A biosynthesis clusters A and B. Specifically up-regulates the expression of the cluster A and B specific transcription factors ATEG_03638 and ATEG_07666, which in turn activate the expression of their respective clusters. The sequence is that of Transcription factor ATEG_07667 from Aspergillus terreus (strain NIH 2624 / FGSC A1156).